Here is a 97-residue protein sequence, read N- to C-terminus: YcgL domain-containing protein Maqu_1609 (97 aa).

The region spanning 5–89 (EFVSVFRSSK…EQDTYIVDFK (85 aa)) is the YcgL domain.

The polypeptide is YcgL domain-containing protein Maqu_1609 (Marinobacter nauticus (strain ATCC 700491 / DSM 11845 / VT8) (Marinobacter aquaeolei)).